Consider the following 249-residue polypeptide: Ubiquinone/menaquinone biosynthesis C-methyltransferase UbiE (249 aa).

S-adenosyl-L-methionine contacts are provided by residues threonine 72, aspartate 93, and 121–122 (NA).

This sequence belongs to the class I-like SAM-binding methyltransferase superfamily. MenG/UbiE family.

It catalyses the reaction a 2-demethylmenaquinol + S-adenosyl-L-methionine = a menaquinol + S-adenosyl-L-homocysteine + H(+). The catalysed reaction is a 2-methoxy-6-(all-trans-polyprenyl)benzene-1,4-diol + S-adenosyl-L-methionine = a 5-methoxy-2-methyl-3-(all-trans-polyprenyl)benzene-1,4-diol + S-adenosyl-L-homocysteine + H(+). It functions in the pathway quinol/quinone metabolism; menaquinone biosynthesis; menaquinol from 1,4-dihydroxy-2-naphthoate: step 2/2. It participates in cofactor biosynthesis; ubiquinone biosynthesis. Its function is as follows. Methyltransferase required for the conversion of demethylmenaquinol (DMKH2) to menaquinol (MKH2) and the conversion of 2-polyprenyl-6-methoxy-1,4-benzoquinol (DDMQH2) to 2-polyprenyl-3-methyl-6-methoxy-1,4-benzoquinol (DMQH2). The polypeptide is Ubiquinone/menaquinone biosynthesis C-methyltransferase UbiE (Hahella chejuensis (strain KCTC 2396)).